Here is a 442-residue protein sequence, read N- to C-terminus: Probable serine/threonine-protein kinase kinase DDB_G0280643 (442 aa).

In terms of domain architecture, Protein kinase spans 74–398; it reads IDPNTIVDCG…VNEILESPYF (325 aa). ATP is bound by residues 80–88 and Lys103; that span reads VDCGTNGIM. The active-site Proton acceptor is the Asp231.

This sequence belongs to the protein kinase superfamily. CMGC Ser/Thr protein kinase family. MAP kinase subfamily.

The catalysed reaction is L-seryl-[protein] + ATP = O-phospho-L-seryl-[protein] + ADP + H(+). The enzyme catalyses L-threonyl-[protein] + ATP = O-phospho-L-threonyl-[protein] + ADP + H(+). This Dictyostelium discoideum (Social amoeba) protein is Probable serine/threonine-protein kinase kinase DDB_G0280643.